A 307-amino-acid polypeptide reads, in one-letter code: Tyrosine recombinase XerC (307 aa).

Residues 6–89 (HNTLQTVNTF…TLRTFFRYLM (84 aa)) enclose the Core-binding (CB) domain. The 184-residue stretch at 110–293 (RLPKALDVDQ…DFQHLAQVYD (184 aa)) folds into the Tyr recombinase domain. Residues R151, K175, H245, R248, and H271 contribute to the active site. Y280 functions as the O-(3'-phospho-DNA)-tyrosine intermediate in the catalytic mechanism.

The protein belongs to the 'phage' integrase family. XerC subfamily. Forms a cyclic heterotetrameric complex composed of two molecules of XerC and two molecules of XerD.

It is found in the cytoplasm. Functionally, site-specific tyrosine recombinase, which acts by catalyzing the cutting and rejoining of the recombining DNA molecules. The XerC-XerD complex is essential to convert dimers of the bacterial chromosome into monomers to permit their segregation at cell division. It also contributes to the segregational stability of plasmids. This Alcanivorax borkumensis (strain ATCC 700651 / DSM 11573 / NCIMB 13689 / SK2) protein is Tyrosine recombinase XerC.